The primary structure comprises 316 residues: Ornithine carbamoyltransferase (316 aa).

Carbamoyl phosphate contacts are provided by residues 59–62 (STRT), glutamine 86, arginine 110, and 137–140 (HPCQ). L-ornithine-binding positions include asparagine 168, aspartate 232, and 236 to 237 (SM). Residues 273–274 (CL) and arginine 301 contribute to the carbamoyl phosphate site.

It belongs to the aspartate/ornithine carbamoyltransferase superfamily. OTCase family.

The protein localises to the cytoplasm. It carries out the reaction carbamoyl phosphate + L-ornithine = L-citrulline + phosphate + H(+). It participates in amino-acid biosynthesis; L-arginine biosynthesis; L-arginine from L-ornithine and carbamoyl phosphate: step 1/3. Reversibly catalyzes the transfer of the carbamoyl group from carbamoyl phosphate (CP) to the N(epsilon) atom of ornithine (ORN) to produce L-citrulline. In Listeria monocytogenes serovar 1/2a (strain ATCC BAA-679 / EGD-e), this protein is Ornithine carbamoyltransferase (argF).